We begin with the raw amino-acid sequence, 301 residues long: 2-methoxy-6-polyprenyl-1,4-benzoquinol methylase, mitochondrial (301 aa).

Residues 1–16 (MQTTRSTRLLSLARRF) constitute a mitochondrion transit peptide. Polar residues predominate over residues 20-31 (RTASQSAQNSKG). A disordered region spans residues 20 to 44 (RTASQSAQNSKGMASGAESISGKEK). Residues T111, D139, and 173 to 174 (DA) each bind S-adenosyl-L-methionine.

It belongs to the class I-like SAM-binding methyltransferase superfamily. MenG/UbiE family. As to quaternary structure, component of a multi-subunit COQ enzyme complex.

It is found in the mitochondrion inner membrane. It carries out the reaction a 2-methoxy-6-(all-trans-polyprenyl)benzene-1,4-diol + S-adenosyl-L-methionine = a 5-methoxy-2-methyl-3-(all-trans-polyprenyl)benzene-1,4-diol + S-adenosyl-L-homocysteine + H(+). The protein operates within cofactor biosynthesis; ubiquinone biosynthesis. Its function is as follows. Methyltransferase required for the conversion of 2-polyprenyl-6-methoxy-1,4-benzoquinol (DDMQH2) to 2-polyprenyl-3-methyl-6-methoxy-1,4-benzoquinol (DMQH2). The protein is 2-methoxy-6-polyprenyl-1,4-benzoquinol methylase, mitochondrial of Drosophila melanogaster (Fruit fly).